The sequence spans 129 residues: Small ribosomal subunit protein uS9 (129 aa).

It belongs to the universal ribosomal protein uS9 family.

This is Small ribosomal subunit protein uS9 (rps9) from Thermoplasma acidophilum (strain ATCC 25905 / DSM 1728 / JCM 9062 / NBRC 15155 / AMRC-C165).